Consider the following 504-residue polypeptide: Cystathionine beta-synthase (504 aa).

Residues cysteine 12 and histidine 23 each contribute to the heme site. Position 78 is an N6-(pyridoxal phosphate)lysine (lysine 78). Residues asparagine 108, 215–219 (GTGGT), and serine 307 each bind pyridoxal 5'-phosphate. 2 CBS domains span residues 375 to 434 (LSFD…IVKC) and 442 to 498 (MVKQ…NGTS).

The protein belongs to the cysteine synthase/cystathionine beta-synthase family. As to quaternary structure, homodimer. Requires pyridoxal 5'-phosphate as cofactor.

The enzyme catalyses L-homocysteine + L-serine = L,L-cystathionine + H2O. It functions in the pathway amino-acid biosynthesis; L-cysteine biosynthesis; L-cysteine from L-homocysteine and L-serine: step 1/2. With respect to regulation, has no response to S-adenosyl-methionine/AdoMet, unlike mammalian orthologs. Binds non-covalently to a heme group that may control the redox sensitivity of the enzyme. Its function is as follows. Hydro-lyase catalyzing the first step of the transsulfuration pathway, where the hydroxyl group of L-serine is displaced by L-homocysteine in a beta-replacement reaction to form L-cystathionine, the precursor of L-cysteine. In Apis mellifera (Honeybee), this protein is Cystathionine beta-synthase.